Consider the following 91-residue polypeptide: ATP synthase subunit c (91 aa).

A run of 2 helical transmembrane segments spans residues 4 to 24 (FTMCVLAAGIGMALGTLGTGI) and 53 to 73 (IGLAMIESLAIYALVVCLIIL).

This sequence belongs to the ATPase C chain family. As to quaternary structure, F-type ATPases have 2 components, F(1) - the catalytic core - and F(0) - the membrane proton channel. F(1) has five subunits: alpha(3), beta(3), gamma(1), delta(1), epsilon(1). F(0) has three main subunits: a(1), b(2) and c(10-14). The alpha and beta chains form an alternating ring which encloses part of the gamma chain. F(1) is attached to F(0) by a central stalk formed by the gamma and epsilon chains, while a peripheral stalk is formed by the delta and b chains.

The protein localises to the cell inner membrane. Its function is as follows. F(1)F(0) ATP synthase produces ATP from ADP in the presence of a proton or sodium gradient. F-type ATPases consist of two structural domains, F(1) containing the extramembraneous catalytic core and F(0) containing the membrane proton channel, linked together by a central stalk and a peripheral stalk. During catalysis, ATP synthesis in the catalytic domain of F(1) is coupled via a rotary mechanism of the central stalk subunits to proton translocation. Key component of the F(0) channel; it plays a direct role in translocation across the membrane. A homomeric c-ring of between 10-14 subunits forms the central stalk rotor element with the F(1) delta and epsilon subunits. In Geotalea uraniireducens (strain Rf4) (Geobacter uraniireducens), this protein is ATP synthase subunit c.